The chain runs to 575 residues: Transcription factor ncaA (575 aa).

2 stretches are compositionally biased toward polar residues: residues Met1–Asn15 and Asp22–Pro34. 2 disordered regions span residues Met1–Arg40 and Ile79–Glu114. The UBZ4-type; degenerate zinc-finger motif lies at Asp39–Lys66. The span at Gly93 to Met102 shows a compositional bias: basic and acidic residues. Residues Phe337–Cys371 adopt a coiled-coil conformation. The tract at residues Gly429–Ala575 is disordered. The segment covering Leu440–Glu454 has biased composition (basic and acidic residues). Positions Glu455 to Pro471 are enriched in low complexity. Positions Ser472–Gly485 are enriched in pro residues. 2 stretches are compositionally biased toward polar residues: residues Asp493–Tyr513 and Ser538–Leu558.

In terms of assembly, interacts with atrR.

The protein resides in the nucleus. Its function is as follows. Transcription factor required for normal voriconazole resistance. Contributes to the function of atrR and regulates the expression of the atrR target gene abcG1. The sequence is that of Transcription factor ncaA from Aspergillus fumigatus (strain ATCC MYA-4609 / CBS 101355 / FGSC A1100 / Af293) (Neosartorya fumigata).